Reading from the N-terminus, the 101-residue chain is Interleukin-8 (101 aa).

Residues 1 to 22 (MTSKLVVALLAAFMLSAALCEA) form the signal peptide. Arginine 27 bears the Citrulline mark. Intrachain disulfides connect cysteine 34-cysteine 61 and cysteine 36-cysteine 77.

It belongs to the intercrine alpha (chemokine CxC) family. In terms of assembly, homodimer. Interacts with TNFAIP6 (via Link domain); this interaction interferes with chemokine binding to glycosaminoglycans. Citrullination at Arg-27 prevents proteolysis, and dampens tissue inflammation, it also enhances leukocytosis, possibly through impaired chemokine clearance from the blood circulation.

The protein localises to the secreted. Functionally, chemotactic factor that mediates inflammatory response by attracting neutrophils, basophils, and T-cells to clear pathogens and protect the host from infection. Also plays an important role in neutrophil activation. Released in response to an inflammatory stimulus, exerts its effect by binding to the G-protein-coupled receptors CXCR1 and CXCR2, primarily found in neutrophils, monocytes and endothelial cells. G-protein heterotrimer (alpha, beta, gamma subunits) constitutively binds to CXCR1/CXCR2 receptor and activation by IL8 leads to beta and gamma subunits release from Galpha (GNAI2 in neutrophils) and activation of several downstream signaling pathways including PI3K and MAPK pathways. The sequence is that of Interleukin-8 (CXCL8) from Felis catus (Cat).